The chain runs to 273 residues: Undecaprenyl-diphosphatase (273 aa).

A run of 8 helical transmembrane segments spans residues 4–24, 45–65, 84–104, 112–132, 149–169, 187–207, 219–239, and 251–271; these read IELL…WLPI, FMSM…VVLF, TFTL…MIPF, FFNP…FIII, ITYQ…IPGT, YVAA…ASLL, AEIV…IIVI, and FKVF…YFLL.

Belongs to the UppP family.

It localises to the cell membrane. The enzyme catalyses di-trans,octa-cis-undecaprenyl diphosphate + H2O = di-trans,octa-cis-undecaprenyl phosphate + phosphate + H(+). In terms of biological role, catalyzes the dephosphorylation of undecaprenyl diphosphate (UPP). Confers resistance to bacitracin. This chain is Undecaprenyl-diphosphatase, found in Lachnoclostridium phytofermentans (strain ATCC 700394 / DSM 18823 / ISDg) (Clostridium phytofermentans).